A 252-amino-acid chain; its full sequence is Imidazole glycerol phosphate synthase subunit HisF (252 aa).

Residues Asp11 and Asp130 contribute to the active site.

Belongs to the HisA/HisF family. In terms of assembly, heterodimer of HisH and HisF.

It localises to the cytoplasm. It carries out the reaction 5-[(5-phospho-1-deoxy-D-ribulos-1-ylimino)methylamino]-1-(5-phospho-beta-D-ribosyl)imidazole-4-carboxamide + L-glutamine = D-erythro-1-(imidazol-4-yl)glycerol 3-phosphate + 5-amino-1-(5-phospho-beta-D-ribosyl)imidazole-4-carboxamide + L-glutamate + H(+). The protein operates within amino-acid biosynthesis; L-histidine biosynthesis; L-histidine from 5-phospho-alpha-D-ribose 1-diphosphate: step 5/9. IGPS catalyzes the conversion of PRFAR and glutamine to IGP, AICAR and glutamate. The HisF subunit catalyzes the cyclization activity that produces IGP and AICAR from PRFAR using the ammonia provided by the HisH subunit. This chain is Imidazole glycerol phosphate synthase subunit HisF, found in Halothermothrix orenii (strain H 168 / OCM 544 / DSM 9562).